Reading from the N-terminus, the 846-residue chain is Auxin response factor 2A (846 aa).

The span at 1–12 shows a compositional bias: polar residues; it reads MAASEVSIQGYS. The segment at 1–30 is disordered; it reads MAASEVSIQGYSEPSDGSRPVSETGRSSSG. Residues 146–248 constitute a DNA-binding region (TF-B3); the sequence is FCKTLTASDT…ELRVGVRRAM (103 aa). 2 disordered regions span residues 380 to 423 and 660 to 693; these read PPAL…HSQA and DMNI…GVAA. Polar residues-rich tracts occupy residues 398 to 408 and 414 to 423; these read ILPTSPDSSVL and SRATADHSQA. Residues 675–693 show a composition bias toward basic and acidic residues; that stretch reads SDQRSEQSKGSKVDDGVAA. Residues 720–804 form the PB1 domain; sequence RSCTKVHKQG…RKIFIYTKEE (85 aa). Composition is skewed to polar residues over residues 809 to 824 and 836 to 846; these read NPGT…SSVA and QLPSESGQAES. A disordered region spans residues 809–846; it reads NPGTLNSKGEDTSSVAEGSDAKEVKNLQLPSESGQAES.

Belongs to the ARF family. Homodimers and heterodimers. Interacts with ASR1. In terms of tissue distribution, expressed in root, leaf and flower. Expressed in flower buds about three days before opening including ovary, petal and sepal with the highest in stamen. Expressed in stem. Expressed in fruit. Expressed in seeds.

It is found in the nucleus. Its function is as follows. Auxin response factors (ARFs) are transcriptional factors that bind specifically to the DNA sequence 5'-TGTCTC-3' found in the auxin-responsive promoter elements (AuxREs). Could act as transcriptional activator or repressor. Involved in the control of fruit ripening process. Regulates expression of a number of ripening regulators, transcription factors, and ethylene biosynthesis and signaling components. May act as a transcriptional repressor of auxin-responsive genes. Regulates vegetative growth, lateral root formation and flower organ senescence, possibly partially by regulating gene expression of auxin and ethylene response factor (ERF) genes. Plays a negative role in axillary shoot meristem formation. The chain is Auxin response factor 2A from Solanum lycopersicum (Tomato).